Here is a 151-residue protein sequence, read N- to C-terminus: D-aminoacyl-tRNA deacylase (151 aa).

Positions 139–140 match the Gly-cisPro motif, important for rejection of L-amino acids motif; sequence GP.

Belongs to the DTD family. As to quaternary structure, homodimer.

The protein resides in the cytoplasm. The enzyme catalyses glycyl-tRNA(Ala) + H2O = tRNA(Ala) + glycine + H(+). The catalysed reaction is a D-aminoacyl-tRNA + H2O = a tRNA + a D-alpha-amino acid + H(+). Functionally, an aminoacyl-tRNA editing enzyme that deacylates mischarged D-aminoacyl-tRNAs. Also deacylates mischarged glycyl-tRNA(Ala), protecting cells against glycine mischarging by AlaRS. Acts via tRNA-based rather than protein-based catalysis; rejects L-amino acids rather than detecting D-amino acids in the active site. By recycling D-aminoacyl-tRNA to D-amino acids and free tRNA molecules, this enzyme counteracts the toxicity associated with the formation of D-aminoacyl-tRNA entities in vivo and helps enforce protein L-homochirality. The protein is D-aminoacyl-tRNA deacylase of Symbiobacterium thermophilum (strain DSM 24528 / JCM 14929 / IAM 14863 / T).